The sequence spans 117 residues: Ribonuclease P protein component (117 aa).

This sequence belongs to the RnpA family. In terms of assembly, consists of a catalytic RNA component (M1 or rnpB) and a protein subunit.

It catalyses the reaction Endonucleolytic cleavage of RNA, removing 5'-extranucleotides from tRNA precursor.. Functionally, RNaseP catalyzes the removal of the 5'-leader sequence from pre-tRNA to produce the mature 5'-terminus. It can also cleave other RNA substrates such as 4.5S RNA. The protein component plays an auxiliary but essential role in vivo by binding to the 5'-leader sequence and broadening the substrate specificity of the ribozyme. This chain is Ribonuclease P protein component, found in Nocardioides sp. (strain ATCC BAA-499 / JS614).